The following is a 378-amino-acid chain: tRNA-specific 2-thiouridylase MnmA (378 aa).

Residues 9–16 (GVSGGVDS) and Met35 contribute to the ATP site. The tract at residues 94–96 (NPD) is interaction with target base in tRNA. Cys99 serves as the catalytic Nucleophile. A disulfide bond links Cys99 and Cys195. Gly123 lines the ATP pocket. The segment at 145 to 147 (KDQ) is interaction with tRNA. Catalysis depends on Cys195, which acts as the Cysteine persulfide intermediate. The tract at residues 307 to 308 (RY) is interaction with tRNA.

The protein belongs to the MnmA/TRMU family.

The protein resides in the cytoplasm. It catalyses the reaction S-sulfanyl-L-cysteinyl-[protein] + uridine(34) in tRNA + AH2 + ATP = 2-thiouridine(34) in tRNA + L-cysteinyl-[protein] + A + AMP + diphosphate + H(+). Functionally, catalyzes the 2-thiolation of uridine at the wobble position (U34) of tRNA, leading to the formation of s(2)U34. In Xanthomonas campestris pv. campestris (strain 8004), this protein is tRNA-specific 2-thiouridylase MnmA.